The sequence spans 295 residues: Hepatic leukemia factor (295 aa).

Basic and acidic residues predominate over residues 34–52 (LHPEDAFSKDRDKGKKLDD). Disordered stretches follow at residues 34–69 (LHPE…GPTL) and 93–160 (SENG…NRNT). The region spanning 225–288 (DDKYWARRRK…GKCKNILAKY (64 aa)) is the bZIP domain. The interval 227-247 (KYWARRRKNNMAAKRSRDARR) is basic motif. Residues 248–255 (LKENQIAI) form a leucine-zipper region.

The protein belongs to the bZIP family. PAR subfamily. Binds DNA specifically as homodimer or heterodimer with other PAR factors. Isoform HLF43 is abundant in brain, liver and kidney. Isoform HLF36 is expressed only in the liver. Both isoforms accumulate in the liver with different circadian amplitudes. Isoform HLF36 reaches peak expression levels between 8 and 12 p.m. Isoform HLF43 displays a more pronounced fluctuation through the day.

Its subcellular location is the nucleus. This Rattus norvegicus (Rat) protein is Hepatic leukemia factor (Hlf).